Reading from the N-terminus, the 172-residue chain is Disulfide bond formation protein B (172 aa).

The Cytoplasmic segment spans residues 1 to 13 (MIIRLAGMSVRQG). Residues 14–30 (CLLGLLMCALMMGVALV) traverse the membrane as a helical segment. Over 31 to 48 (LQYVYGLTPCPLCIGQRI) the chain is Periplasmic. C40 and C43 are oxidised to a cystine. A helical transmembrane segment spans residues 49–65 (AVLLAAFVFAIGALHNP). The Cytoplasmic segment spans residues 66–72 (AGNLGRG). Residues 73–90 (LYAGLAALASVLGLAVAA) traverse the membrane as a helical segment. The Periplasmic segment spans residues 91-147 (RHVWLQSLPPENVPSCGPGLDYMMEVLPLWDVLSRVLAGSGECAEIHGSLLGMSIPQ). A disulfide bridge links C106 with C133. The helical transmembrane segment at 148–166 (WTLLGFAVLLLIPLGMLAG) threads the bilayer. Residues 167-172 (IVIRRR) lie on the Cytoplasmic side of the membrane.

This sequence belongs to the DsbB family.

The protein resides in the cell inner membrane. Functionally, required for disulfide bond formation in some periplasmic proteins. Acts by oxidizing the DsbA protein. The protein is Disulfide bond formation protein B of Chromohalobacter salexigens (strain ATCC BAA-138 / DSM 3043 / CIP 106854 / NCIMB 13768 / 1H11).